The primary structure comprises 174 residues: Negative modulator of initiation of replication (174 aa).

This sequence belongs to the SeqA family. In terms of assembly, homodimer. Polymerizes to form helical filaments.

The protein resides in the cytoplasm. In terms of biological role, negative regulator of replication initiation, which contributes to regulation of DNA replication and ensures that replication initiation occurs exactly once per chromosome per cell cycle. Binds to pairs of hemimethylated GATC sequences in the oriC region, thus preventing assembly of replication proteins and re-initiation at newly replicated origins. Repression is relieved when the region becomes fully methylated. The sequence is that of Negative modulator of initiation of replication from Pseudoalteromonas atlantica (strain T6c / ATCC BAA-1087).